A 320-amino-acid polypeptide reads, in one-letter code: tRNA uridine(34) hydroxylase (320 aa).

In terms of domain architecture, Rhodanese spans 125-221; sequence KEKRPLLLDV…YGLKQGSEHW (97 aa). Cys-181 functions as the Cysteine persulfide intermediate in the catalytic mechanism.

Belongs to the TrhO family.

The enzyme catalyses uridine(34) in tRNA + AH2 + O2 = 5-hydroxyuridine(34) in tRNA + A + H2O. In terms of biological role, catalyzes oxygen-dependent 5-hydroxyuridine (ho5U) modification at position 34 in tRNAs. The chain is tRNA uridine(34) hydroxylase from Protochlamydia amoebophila (strain UWE25).